We begin with the raw amino-acid sequence, 1003 residues long: Anoctamin-2 (1003 aa).

Residues 1 to 68 are disordered; it reads MATPGPRDIP…PCGGESTRSS (68 aa). Topologically, residues 1–365 are cytoplasmic; it reads MATPGPRDIP…FGEKIGLYFA (365 aa). Low complexity predominate over residues 10-21; the sequence is PLLPGSPRRLSP. A helical membrane pass occupies residues 366–386; that stretch reads WLGLYTSFLIPSSVIGVIVFL. Residues 387–434 lie on the Extracellular side of the membrane; the sequence is YGCATIEEDIPSREMCDQQNAFTMCPLCDKSCDYWNLSSACGTAQASH. The N-linked (GlcNAc...) asparagine glycan is linked to N422. Residues 435 to 455 form a helical membrane-spanning segment; it reads LFDNPATVFFSIFMALWATMF. Over 456-538 the chain is Cytoplasmic; sequence LENWKRLQMR…KDRFPGYLMN (83 aa). A helical membrane pass occupies residues 539 to 559; the sequence is FASILFMIALTFSIVFGVIVY. The Extracellular segment spans residues 560 to 582; that stretch reads RITTAAALSLNKATRSNVRVTVT. Residues 583 to 603 traverse the membrane as a helical segment; sequence ATAVIINLVVILILDEIYGAV. Over 604-623 the chain is Cytoplasmic; sequence AKWLTKIEVPKTEQTFEERL. A helical transmembrane segment spans residues 624-644; sequence ILKAFLLKFVNAYSPIFYVAF. Over 645–748 the chain is Extracellular; that stretch reads FKGRFVGRPG…YTGLTPEYME (104 aa). A helical membrane pass occupies residues 749–769; the sequence is MIIQFGFVTLFVASFPLAPVF. Topologically, residues 770–801 are cytoplasmic; that stretch reads ALLNNVIEVRLDAKKFVTELRRPDAVRTKDIG. Residues 802-822 form a helical membrane-spanning segment; sequence IWFDILSGIGKFSVISNAFVI. The Extracellular portion of the chain corresponds to 823-907; sequence AITSDFIPRL…QYWFILSARL (85 aa). N-linked (GlcNAc...) asparagine glycosylation is found at N841, N849, and N856. The chain crosses the membrane as a helical span at residues 908–928; it reads AFVIIFQNLVMFLSVLVDWMI. Residues 929 to 1003 are Cytoplasmic-facing; that stretch reads PDIPTDISDQ…MSSGSQHTNV (75 aa). The interval 961 to 1003 is disordered; it reads MDEPALRSPGGGDRSRSRAASSAPSGQSQLGSMMSSGSQHTNV. Residues 978–1003 are compositionally biased toward low complexity; it reads RAASSAPSGQSQLGSMMSSGSQHTNV. The DLG4 binding (PDZ) motif lies at 1001–1003; it reads TNV.

This sequence belongs to the anoctamin family. Homodimer. Component of a presynaptic protein complex recruited to specialized plasma membrane domains of photoreceptors. Interacts with DLG4 by its C-terminal region. Retina, especially in the photoreceptor synaptic terminals.

It is found in the cell membrane. The catalysed reaction is chloride(in) = chloride(out). Its activity is regulated as follows. Channel activity is repressed by chloride inhibitors; strongly by niflumic acid (NFA), partially by flufenamic acid (FFA), and only slightly by meclofenamic acid (MFA), 5-Nitro-2-(3-phenylpropylamino)benzoic acid (NPPB), 4-acetamido-4'-isothiocyanato-stilben-2,2'-disulfonate (SITS), and 4,4'-diisothiocyanatostilbene-2,2'-disulfonic acid (DIDS). In terms of biological role, calcium-activated chloride channel (CaCC) which may play a role in olfactory signal transduction. Odorant molecules bind to odor-sensing receptors (OSRs), leading to an increase in calcium entry that activates CaCC current which amplifies the depolarization of the OSR cells, ANO2 seems to be the underlying chloride channel involved in this process. May mediate light perception amplification in retina. This is Anoctamin-2 (ANO2) from Homo sapiens (Human).